The following is a 407-amino-acid chain: S-adenosylmethionine synthase (407 aa).

His-19 provides a ligand contact to ATP. Asp-21 contacts Mg(2+). A K(+)-binding site is contributed by Glu-47. L-methionine-binding residues include Glu-60 and Gln-103. Residues 103–113 form a flexible loop region; the sequence is QSQEIADGVDT. Residues 108 to 131 are disordered; sequence ADGVDTSQEARGDGHFEEDDRAGA. ATP contacts are provided by residues 178–180, Asp-258, 264–265, Ala-281, and Lys-285; these read DGK and RK. Position 258 (Asp-258) interacts with L-methionine. Lys-289 contributes to the L-methionine binding site.

This sequence belongs to the AdoMet synthase family. In terms of assembly, homotetramer; dimer of dimers. It depends on Mg(2+) as a cofactor. K(+) serves as cofactor.

The protein resides in the cytoplasm. It carries out the reaction L-methionine + ATP + H2O = S-adenosyl-L-methionine + phosphate + diphosphate. It participates in amino-acid biosynthesis; S-adenosyl-L-methionine biosynthesis; S-adenosyl-L-methionine from L-methionine: step 1/1. Functionally, catalyzes the formation of S-adenosylmethionine (AdoMet) from methionine and ATP. The overall synthetic reaction is composed of two sequential steps, AdoMet formation and the subsequent tripolyphosphate hydrolysis which occurs prior to release of AdoMet from the enzyme. This chain is S-adenosylmethionine synthase, found in Corynebacterium efficiens (strain DSM 44549 / YS-314 / AJ 12310 / JCM 11189 / NBRC 100395).